Reading from the N-terminus, the 298-residue chain is 4-hydroxy-tetrahydrodipicolinate synthase (298 aa).

Thr-51 contacts pyruvate. Tyr-139 serves as the catalytic Proton donor/acceptor. The Schiff-base intermediate with substrate role is filled by Lys-167. Ile-209 is a pyruvate binding site.

This sequence belongs to the DapA family. In terms of assembly, homotetramer; dimer of dimers.

The protein resides in the cytoplasm. The enzyme catalyses L-aspartate 4-semialdehyde + pyruvate = (2S,4S)-4-hydroxy-2,3,4,5-tetrahydrodipicolinate + H2O + H(+). The protein operates within amino-acid biosynthesis; L-lysine biosynthesis via DAP pathway; (S)-tetrahydrodipicolinate from L-aspartate: step 3/4. Functionally, catalyzes the condensation of (S)-aspartate-beta-semialdehyde [(S)-ASA] and pyruvate to 4-hydroxy-tetrahydrodipicolinate (HTPA). This is 4-hydroxy-tetrahydrodipicolinate synthase from Histophilus somni (strain 129Pt) (Haemophilus somnus).